Consider the following 357-residue polypeptide: Elongation factor Ts (357 aa).

Positions 82 to 85 (TDFV) are involved in Mg(2+) ion dislocation from EF-Tu.

The protein belongs to the EF-Ts family.

It is found in the cytoplasm. In terms of biological role, associates with the EF-Tu.GDP complex and induces the exchange of GDP to GTP. It remains bound to the aminoacyl-tRNA.EF-Tu.GTP complex up to the GTP hydrolysis stage on the ribosome. The protein is Elongation factor Ts of Campylobacter jejuni subsp. doylei (strain ATCC BAA-1458 / RM4099 / 269.97).